The primary structure comprises 172 residues: 3-hydroxydecanoyl-[acyl-carrier-protein] dehydratase (172 aa).

The active site involves His-71.

Belongs to the thioester dehydratase family. FabA subfamily. Homodimer.

It is found in the cytoplasm. The enzyme catalyses a (3R)-hydroxyacyl-[ACP] = a (2E)-enoyl-[ACP] + H2O. It catalyses the reaction (3R)-hydroxydecanoyl-[ACP] = (2E)-decenoyl-[ACP] + H2O. The catalysed reaction is (2E)-decenoyl-[ACP] = (3Z)-decenoyl-[ACP]. Its pathway is lipid metabolism; fatty acid biosynthesis. Functionally, necessary for the introduction of cis unsaturation into fatty acids. Catalyzes the dehydration of (3R)-3-hydroxydecanoyl-ACP to E-(2)-decenoyl-ACP and then its isomerization to Z-(3)-decenoyl-ACP. Can catalyze the dehydratase reaction for beta-hydroxyacyl-ACPs with saturated chain lengths up to 16:0, being most active on intermediate chain length. This is 3-hydroxydecanoyl-[acyl-carrier-protein] dehydratase from Salmonella choleraesuis (strain SC-B67).